The primary structure comprises 581 residues: 2-succinyl-5-enolpyruvyl-6-hydroxy-3-cyclohexene-1-carboxylate synthase (581 aa).

Belongs to the TPP enzyme family. MenD subfamily. Homodimer. It depends on Mg(2+) as a cofactor. Mn(2+) is required as a cofactor. The cofactor is thiamine diphosphate.

It catalyses the reaction isochorismate + 2-oxoglutarate + H(+) = 5-enolpyruvoyl-6-hydroxy-2-succinyl-cyclohex-3-ene-1-carboxylate + CO2. The protein operates within quinol/quinone metabolism; 1,4-dihydroxy-2-naphthoate biosynthesis; 1,4-dihydroxy-2-naphthoate from chorismate: step 2/7. It participates in cofactor biosynthesis; phylloquinone biosynthesis. In terms of biological role, catalyzes the thiamine diphosphate-dependent decarboxylation of 2-oxoglutarate and the subsequent addition of the resulting succinic semialdehyde-thiamine pyrophosphate anion to isochorismate to yield 2-succinyl-5-enolpyruvyl-6-hydroxy-3-cyclohexene-1-carboxylate (SEPHCHC). This is 2-succinyl-5-enolpyruvyl-6-hydroxy-3-cyclohexene-1-carboxylate synthase from Gloeothece citriformis (strain PCC 7424) (Cyanothece sp. (strain PCC 7424)).